The following is a 396-amino-acid chain: Na(+)/H(+) antiporter NhaA 1 (396 aa).

Transmembrane regions (helical) follow at residues 18-38 (LLLI…LSWL), 60-80 (LLLW…GLEV), 95-115 (IALP…IYTG), 126-146 (GWAI…ALLG), 155-175 (LFLL…IALF), 178-198 (ADLS…LFIL), 201-221 (TGVT…ICVL), 262-282 (VAYG…LAGI), 295-315 (IAAG…WIGV), 333-353 (GMAV…TLAL), and 362-382 (AARL…YYLL).

Belongs to the NhaA Na(+)/H(+) (TC 2.A.33) antiporter family.

It localises to the cell inner membrane. The enzyme catalyses Na(+)(in) + 2 H(+)(out) = Na(+)(out) + 2 H(+)(in). Functionally, na(+)/H(+) antiporter that extrudes sodium in exchange for external protons. The chain is Na(+)/H(+) antiporter NhaA 1 from Syntrophotalea carbinolica (strain DSM 2380 / NBRC 103641 / GraBd1) (Pelobacter carbinolicus).